A 508-amino-acid polypeptide reads, in one-letter code: MSWHVQNENFILDSTRIFMKAFHLLLFDGSLIFPECILIFGLILLLMIDSTSDQKERPWLYFISSTSLVMSITALLFRWREEPMISFSGNFQTNNFNEIFQFLILLCSTLCIPLSVEYIECTEMAITEFLLFVLTATLGGMFLCGANDFITIFVAPECFSLCSYLLSGYTKKDVRSNEATMKYLLMGGASSSILVHGFSWLYGLSGGEIELQEIVNGLINTQMYNSPGISIALIFITVGIGFKLSPAPSHQWTPDVYEGSPTPVVAFLSVTSKVAASASATRIFDIPFYFSSNEWHLLLEILAILSMILGNLIAITQTSMKRMLAYSSIGQIGYVIIGIIVGDSNDGYASMITYMLFYISMNLGAFACIVLFGLRTGTDNIRDYAGLYTKDPFLALSLALCLLSLGGLPPLAGFFGKLYLFWCGWQAGLYFLVFIGLLTSVVSIYYYLKIIKLLMTGRNQAITPHVRNYRRSPSNNSIELSMIVCVIASTIPGISMNPIIAIAQDTLF.

13 helical membrane-spanning segments follow: residues 24 to 44 (LLLF…GLIL), 59 to 79 (WLYF…LFRW), 99 to 119 (IFQF…VEYI), 124 to 144 (MAIT…MFLC), 149 to 169 (FITI…LSGY), 184 to 204 (LLMG…LYGL), 227 to 247 (PGIS…LSPA), 295 to 315 (WHLL…LIAI), 323 to 343 (MLAY…IVGD), 354 to 374 (YMLF…LFGL), 395 to 415 (ALSL…AGFF), 418 to 438 (LYLF…IGLL), and 482 to 502 (MIVC…IIAI).

Belongs to the complex I subunit 2 family. As to quaternary structure, NDH is composed of at least 16 different subunits, 5 of which are encoded in the nucleus.

It localises to the plastid. The protein localises to the chloroplast thylakoid membrane. The catalysed reaction is a plastoquinone + NADH + (n+1) H(+)(in) = a plastoquinol + NAD(+) + n H(+)(out). It catalyses the reaction a plastoquinone + NADPH + (n+1) H(+)(in) = a plastoquinol + NADP(+) + n H(+)(out). In terms of biological role, NDH shuttles electrons from NAD(P)H:plastoquinone, via FMN and iron-sulfur (Fe-S) centers, to quinones in the photosynthetic chain and possibly in a chloroplast respiratory chain. The immediate electron acceptor for the enzyme in this species is believed to be plastoquinone. Couples the redox reaction to proton translocation, and thus conserves the redox energy in a proton gradient. The sequence is that of NAD(P)H-quinone oxidoreductase subunit 2 B, chloroplastic from Ipomoea purpurea (Common morning glory).